A 388-amino-acid polypeptide reads, in one-letter code: Succinate--CoA ligase [ADP-forming] subunit beta (388 aa).

Positions Lys9–His244 constitute an ATP-grasp domain. Residues Lys46, Gly53 to Gly55, Glu99, Thr102, and Glu107 each bind ATP. Mg(2+) contacts are provided by Asn199 and Asp213. Substrate-binding positions include Asn264 and Gly321–Val323.

It belongs to the succinate/malate CoA ligase beta subunit family. In terms of assembly, heterotetramer of two alpha and two beta subunits. Mg(2+) is required as a cofactor.

The catalysed reaction is succinate + ATP + CoA = succinyl-CoA + ADP + phosphate. The enzyme catalyses GTP + succinate + CoA = succinyl-CoA + GDP + phosphate. It functions in the pathway carbohydrate metabolism; tricarboxylic acid cycle; succinate from succinyl-CoA (ligase route): step 1/1. Succinyl-CoA synthetase functions in the citric acid cycle (TCA), coupling the hydrolysis of succinyl-CoA to the synthesis of either ATP or GTP and thus represents the only step of substrate-level phosphorylation in the TCA. The beta subunit provides nucleotide specificity of the enzyme and binds the substrate succinate, while the binding sites for coenzyme A and phosphate are found in the alpha subunit. The polypeptide is Succinate--CoA ligase [ADP-forming] subunit beta (Alteromonas mediterranea (strain DSM 17117 / CIP 110805 / LMG 28347 / Deep ecotype)).